Consider the following 330-residue polypeptide: Malate dehydrogenase (330 aa).

G15–A21 is an NAD(+) binding site. The substrate site is built by R96 and R102. NAD(+) contacts are provided by residues N109, Q116, and V133–N135. Residues N135 and R166 each contribute to the substrate site. Catalysis depends on H191, which acts as the Proton acceptor.

Belongs to the LDH/MDH superfamily. MDH type 2 family.

It carries out the reaction (S)-malate + NAD(+) = oxaloacetate + NADH + H(+). In terms of biological role, catalyzes the reversible oxidation of malate to oxaloacetate. In Chlamydia caviae (strain ATCC VR-813 / DSM 19441 / 03DC25 / GPIC) (Chlamydophila caviae), this protein is Malate dehydrogenase.